Consider the following 319-residue polypeptide: Putative replication factor C small subunit R395 (319 aa).

Residue 45–52 (GSPGVGKT) coordinates ATP.

This sequence belongs to the activator 1 small subunits family. RfcS subfamily.

Its function is as follows. Part of the RFC clamp loader complex which loads the PCNA sliding clamp onto DNA. The protein is Putative replication factor C small subunit R395 of Acanthamoeba polyphaga mimivirus (APMV).